A 405-amino-acid chain; its full sequence is Arginine biosynthesis bifunctional protein ArgJ (405 aa).

Residues Thr152, Lys178, Thr189, Glu276, Asn400, and Thr405 each coordinate substrate. The active-site Nucleophile is the Thr189.

Belongs to the ArgJ family. In terms of assembly, heterotetramer of two alpha and two beta chains.

It is found in the cytoplasm. It catalyses the reaction N(2)-acetyl-L-ornithine + L-glutamate = N-acetyl-L-glutamate + L-ornithine. The enzyme catalyses L-glutamate + acetyl-CoA = N-acetyl-L-glutamate + CoA + H(+). It participates in amino-acid biosynthesis; L-arginine biosynthesis; L-ornithine and N-acetyl-L-glutamate from L-glutamate and N(2)-acetyl-L-ornithine (cyclic): step 1/1. Its pathway is amino-acid biosynthesis; L-arginine biosynthesis; N(2)-acetyl-L-ornithine from L-glutamate: step 1/4. In terms of biological role, catalyzes two activities which are involved in the cyclic version of arginine biosynthesis: the synthesis of N-acetylglutamate from glutamate and acetyl-CoA as the acetyl donor, and of ornithine by transacetylation between N(2)-acetylornithine and glutamate. The chain is Arginine biosynthesis bifunctional protein ArgJ from Pseudomonas fluorescens (strain Pf0-1).